We begin with the raw amino-acid sequence, 233 residues long: Cysteine-rich venom protein LIO1 (233 aa).

A signal peptide spans 1 to 18; it reads MIVFILLSFAAVLQQSFG. An SCP domain is found at 37-165; sequence VDTHNSYRRS…PYNYFYVCQY (129 aa). 7 disulfide bridges follow: Cys-74–Cys-152, Cys-91–Cys-166, Cys-147–Cys-163, Cys-185–Cys-192, Cys-188–Cys-197, Cys-210–Cys-228, and Cys-219–Cys-232. Residues 201–233 enclose the ShKT domain; it reads CTSENVFTNCNDMVKESGCQDERMKSICPASCF.

This sequence belongs to the CRISP family. As to expression, expressed by the venom gland.

The protein resides in the secreted. In terms of biological role, blocks contraction of smooth muscle elicited by high potassium-induced depolarization, but does not block caffeine-stimulated contraction. May target voltage-gated calcium channels on smooth muscle. This chain is Cysteine-rich venom protein LIO1, found in Erythrolamprus poecilogyrus (Water snake).